We begin with the raw amino-acid sequence, 144 residues long: Large ribosomal subunit protein uL15 (144 aa).

The segment at Met1–Tyr45 is disordered. Gly residues predominate over residues Arg21 to Cys31.

Belongs to the universal ribosomal protein uL15 family. Part of the 50S ribosomal subunit.

In terms of biological role, binds to the 23S rRNA. In Legionella pneumophila (strain Corby), this protein is Large ribosomal subunit protein uL15.